The sequence spans 636 residues: Molybdenum cofactor biosynthesis protein 1 (636 aa).

The molybdenum cofactor biosynthesis protein A stretch occupies residues Met-1–Ile-383. The interval Arg-19–Arg-40 is disordered. The residue at position 64 (Ser-64) is a Phosphoserine. The Radical SAM core domain occupies Ser-64–Glu-279. Residue Arg-73 coordinates GTP. Residues Cys-80 and Cys-84 each coordinate [4Fe-4S] cluster. Tyr-86 serves as a coordination point for S-adenosyl-L-methionine. Residue Cys-87 coordinates [4Fe-4S] cluster. GTP is bound at residue Arg-123. Gly-127 is an S-adenosyl-L-methionine binding site. A GTP-binding site is contributed by Thr-154. Ser-178 lines the S-adenosyl-L-methionine pocket. An N6-acetyllysine modification is found at Lys-198. Residue Lys-215 coordinates GTP. Met-249 lines the S-adenosyl-L-methionine pocket. Residues Cys-312 and Cys-315 each contribute to the [4Fe-4S] cluster site. Arg-317–Arg-319 lines the GTP pocket. Cys-329 provides a ligand contact to [4Fe-4S] cluster. The segment at Gln-414–Ala-636 is molybdenum cofactor biosynthesis protein C. The disordered stretch occupies residues Ser-444 to His-484. N6-acetyllysine is present on Lys-528. The active-site For molybdenum cofactor biosynthesis protein C activity is Asp-606.

The protein in the C-terminal section; belongs to the MoaC family. This sequence in the N-terminal section; belongs to the radical SAM superfamily. MoaA family. In terms of assembly, isoform Mocs1a and isoform Mocs1b probably form a heterooligomer. The cofactor is [4Fe-4S] cluster.

The catalysed reaction is GTP + AH2 + S-adenosyl-L-methionine = (8S)-3',8-cyclo-7,8-dihydroguanosine 5'-triphosphate + 5'-deoxyadenosine + L-methionine + A + H(+). It catalyses the reaction (8S)-3',8-cyclo-7,8-dihydroguanosine 5'-triphosphate = cyclic pyranopterin phosphate + diphosphate. It participates in cofactor biosynthesis; molybdopterin biosynthesis. Functionally, isoform Mocs1a and isoform Mocs1b probably form a complex that catalyzes the conversion of 5'-GTP to cyclic pyranopterin monophosphate (cPMP). Mocs1a catalyzes the cyclization of GTP to (8S)-3',8-cyclo-7,8-dihydroguanosine 5'-triphosphate and Mocs1b catalyzes the subsequent conversion of (8S)-3',8-cyclo-7,8-dihydroguanosine 5'-triphosphate to cPMP. In Mus musculus (Mouse), this protein is Molybdenum cofactor biosynthesis protein 1 (Mocs1).